A 62-amino-acid chain; its full sequence is Temporin-La (62 aa).

The signal sequence occupies residues 1 to 22 (MFPLKKSLLLLFFLGTINLSFC). Residues 23 to 47 (EEERDVDQDERRDDPGERNVQVEKR) constitute a propeptide that is removed on maturation. Leu60 bears the Leucine amide mark.

It belongs to the frog skin active peptide (FSAP) family. Temporin subfamily. Expressed by the skin glands.

It is found in the secreted. The protein localises to the target cell membrane. In terms of biological role, antimicrobial peptide with amphipathic alpha-helical structure that acts against both Gram-positive and Gram-negative bacteria and the fungus Candida albicans. Is active against S.aureus ATCC 25923 (MIC=2.5 ug/ml), S.suis 2 CVCC 606 (MIC=15.6 ug/ml), Salmonella ATCC 20020 (MIC=15.6 ug/ml), P.aeruginosa ATCC 227853 (MIC=60 ug/ml), and C.albicans ATCC10231 (MIC=31.25 ug/ml). Is not active against B.subtilis ADB403, E.coli ATCC 25922, and K.pneumoniae ATCC 700603. Also shows a strong antitumor activity, but no hemolytic activity. This chain is Temporin-La, found in Aquarana catesbeiana (American bullfrog).